We begin with the raw amino-acid sequence, 247 residues long: MAGHSKWANTKHRKAAQDAKRGKIFTKIIRELVTAARLGGGDPASNPRLRAAIDKALSNNMTRDTLNRAIARGVGSDEADNMETIIYEGYGPGGTAVMVECLSDNRNRTVSDVRHAFTKTGGNLGTDGSVAYLFAKKGVISYAPGLDEDAVMEAALEAGADDVETYDDGAIDVYTTPETFGDVKDALDAAGFVAESAEVSMIPSTKAELDAETAPKLLRLIDMLEDSDDVQEVYHNGEISDEIAALL.

It belongs to the TACO1 family.

The protein resides in the cytoplasm. The sequence is that of Probable transcriptional regulatory protein plu2109 from Photorhabdus laumondii subsp. laumondii (strain DSM 15139 / CIP 105565 / TT01) (Photorhabdus luminescens subsp. laumondii).